Consider the following 102-residue polypeptide: Small ribosomal subunit protein uS10 (102 aa).

Belongs to the universal ribosomal protein uS10 family. Part of the 30S ribosomal subunit.

Involved in the binding of tRNA to the ribosomes. In Lactiplantibacillus plantarum (strain ATCC BAA-793 / NCIMB 8826 / WCFS1) (Lactobacillus plantarum), this protein is Small ribosomal subunit protein uS10.